A 365-amino-acid chain; its full sequence is tRNA(Met) cytidine acetate ligase (365 aa).

Residues 7 to 20 (IAEF…HKYL), glycine 96, asparagine 152, and arginine 175 each bind ATP.

The protein belongs to the TmcAL family.

The protein resides in the cytoplasm. It catalyses the reaction cytidine(34) in elongator tRNA(Met) + acetate + ATP = N(4)-acetylcytidine(34) in elongator tRNA(Met) + AMP + diphosphate. Catalyzes the formation of N(4)-acetylcytidine (ac(4)C) at the wobble position of elongator tRNA(Met), using acetate and ATP as substrates. First activates an acetate ion to form acetyladenylate (Ac-AMP) and then transfers the acetyl group to tRNA to form ac(4)C34. This chain is tRNA(Met) cytidine acetate ligase, found in Streptococcus pneumoniae serotype 19F (strain G54).